The following is a 223-amino-acid chain: N-terminal Xaa-Pro-Lys N-methyltransferase 1-B (223 aa).

Residues G69, R74, D91–T93, L119–Q120, and Q135 contribute to the S-adenosyl-L-methionine site.

This sequence belongs to the methyltransferase superfamily. NTM1 family.

Its subcellular location is the nucleus. The catalysed reaction is N-terminal L-alanyl-L-prolyl-L-lysyl-[protein] + 3 S-adenosyl-L-methionine = N-terminal N,N,N-trimethyl-L-alanyl-L-prolyl-L-lysyl-[protein] + 3 S-adenosyl-L-homocysteine + 3 H(+). It carries out the reaction N-terminal L-seryl-L-prolyl-L-lysyl-[protein] + 3 S-adenosyl-L-methionine = N-terminal N,N,N-trimethyl-L-seryl-L-prolyl-L-lysyl-[protein] + 3 S-adenosyl-L-homocysteine + 3 H(+). It catalyses the reaction N-terminal L-prolyl-L-prolyl-L-lysyl-[protein] + 2 S-adenosyl-L-methionine = N-terminal N,N-dimethyl-L-prolyl-L-prolyl-L-lysyl-[protein] + 2 S-adenosyl-L-homocysteine + 2 H(+). Functionally, distributive alpha-N-methyltransferase that methylates the N-terminus of target proteins containing the N-terminal motif [Ala/Gly/Pro/Ser]-Pro-Lys when the initiator Met is cleaved. Specifically catalyzes mono-, di- or tri-methylation of the exposed alpha-amino group of the Ala, Gly or Ser residue in the [Ala/Gly/Ser]-Pro-Lys motif and mono- or di-methylation of Pro in the Pro-Pro-Lys motif. Required during mitosis for normal bipolar spindle formation and chromosome segregation via its action on target proteins. The chain is N-terminal Xaa-Pro-Lys N-methyltransferase 1-B (ntmt1-b) from Xenopus laevis (African clawed frog).